We begin with the raw amino-acid sequence, 289 residues long: Aquaporin PIP2-3 (289 aa).

The tract at residues 1–25 (MAKQDIEASGPEAGEFSAKDYTDPP) is disordered. The next 2 helical transmembrane spans lie at 43–63 (AVIA…ATVI) and 80–100 (CGGV…FILV). The short motif at 112-114 (NPA) is the NPA 1 element. 3 consecutive transmembrane segments (helical) span residues 131-151 (LLYI…VKGF), 173-193 (GTGL…VFSA), and 207-227 (VLAP…TIPI). The NPA 2 motif lies at 233-235 (NPA). Residues 255 to 275 (IFWVGPLIGAAIAAAYHQYVL) traverse the membrane as a helical segment.

The protein belongs to the MIP/aquaporin (TC 1.A.8) family. PIP (TC 1.A.8.11) subfamily.

It is found in the cell membrane. Functionally, aquaporins facilitate the transport of water and small neutral solutes across cell membranes. This chain is Aquaporin PIP2-3 (PIP2-3), found in Zea mays (Maize).